Here is a 520-residue protein sequence, read N- to C-terminus: 2-isopropylmalate synthase (520 aa).

The Pyruvate carboxyltransferase domain maps to 12–274; it reads VIIFDTTLRD…WNKIDTTQLT (263 aa). D21, H209, H211, and N245 together coordinate Mn(2+). Positions 398–520 are regulatory domain; it reads KLTSLTVIAG…RDTVTTAAAS (123 aa).

This sequence belongs to the alpha-IPM synthase/homocitrate synthase family. LeuA type 1 subfamily. Homodimer. The cofactor is Mn(2+).

Its subcellular location is the cytoplasm. It catalyses the reaction 3-methyl-2-oxobutanoate + acetyl-CoA + H2O = (2S)-2-isopropylmalate + CoA + H(+). The protein operates within amino-acid biosynthesis; L-leucine biosynthesis; L-leucine from 3-methyl-2-oxobutanoate: step 1/4. Its function is as follows. Catalyzes the condensation of the acetyl group of acetyl-CoA with 3-methyl-2-oxobutanoate (2-ketoisovalerate) to form 3-carboxy-3-hydroxy-4-methylpentanoate (2-isopropylmalate). In Bradyrhizobium diazoefficiens (strain JCM 10833 / BCRC 13528 / IAM 13628 / NBRC 14792 / USDA 110), this protein is 2-isopropylmalate synthase.